The primary structure comprises 558 residues: Phosphatidylserine lipase ABHD16A (558 aa).

The next 2 helical transmembrane spans lie at 60 to 80 (ILALASVFWSISYYSSPFAFF) and 93 to 113 (VVPFSHYAGTLLVLLAGVACL). Residues 114 to 558 (RGIGRWTNPQ…AQHFQMPWCL (445 aa)) lie on the Cytoplasmic side of the membrane. The 127-residue stretch at 281–407 (LVICCEGNAG…LVTRTVRQHL (127 aa)) folds into the AB hydrolase-1 domain. Catalysis depends on charge relay system residues Ser-355, Asp-430, and His-507.

Belongs to the AB hydrolase superfamily. ABHD16 family.

It is found in the membrane. It catalyses the reaction 1-heptadecanoyl-2-(5Z,8Z,11Z,14Z-eicosatetraenoyl)-sn-glycero-3-phosphoserine + H2O = 1-heptadecanoyl-sn-glycero-3-phosphoserine + (5Z,8Z,11Z,14Z)-eicosatetraenoate + H(+). The catalysed reaction is 1-hexadecanoyl-2-(9Z-octadecenoyl)-sn-glycero-3-phospho-L-serine + H2O = 1-hexadecanoyl-sn-glycero-3-phospho-L-serine + (9Z)-octadecenoate + H(+). The enzyme catalyses 1-octadecanoyl-2-(9Z,12Z-octadecadienoyl)-sn-glycero-3-phosphoserine + H2O = 1-octadecanoyl-sn-glycero-3-phosphoserine + (9Z,12Z)-octadecadienoate + H(+). It carries out the reaction 1-heptadecanoyl-2-(5Z,8Z,11Z,14Z-eicosatetraenoyl)-sn-glycero-3-phosphocholine + H2O = 1-heptadecanoyl-sn-glycero-3-phosphocholine + (5Z,8Z,11Z,14Z)-eicosatetraenoate + H(+). It catalyses the reaction 1-hexadecanoyl-2-(9Z-octadecenoyl)-sn-glycero-3-phosphoglycerol + H2O = 1-hexadecanoyl-sn-glycero-3-phosphoglycerol + (9Z)-octadecenoate + H(+). The catalysed reaction is 1-hexadecanoyl-2-(9Z-octadecenoyl)-sn-glycero-3-phospho-(1D-myo-inositol) + H2O = 1-hexadecanoyl-sn-glycero-3-phospho-(1D-myo-inositol) + (9Z)-octadecenoate + H(+). The enzyme catalyses 1-heptadecanoyl-2-(5Z,8Z,11Z,14Z-eicosatetraenoyl)-sn-glycero-3-phosphoethanolamine + H2O = 1-heptadecanoyl-sn-glycero-3-phosphoethanolamine + (5Z,8Z,11Z,14Z)-eicosatetraenoate + H(+). It carries out the reaction 1-hexadecanoyl-2-(9Z-octadecenoyl)-sn-glycero-3-phospho-(1'-sn-glycerol) + H2O = 1-hexadecanoyl-sn-glycero-3-phospho-(1'-sn-glycerol) + (9Z)-octadecenoate + H(+). It catalyses the reaction Hydrolyzes glycerol monoesters of long-chain fatty acids.. The catalysed reaction is 1-tetradecanoylglycerol + H2O = tetradecanoate + glycerol + H(+). The enzyme catalyses 2-hexadecanoylglycerol + H2O = glycerol + hexadecanoate + H(+). It carries out the reaction 1-(9Z-octadecenoyl)-glycerol + H2O = glycerol + (9Z)-octadecenoate + H(+). It catalyses the reaction 2-(9Z-octadecenoyl)-glycerol + H2O = glycerol + (9Z)-octadecenoate + H(+). The catalysed reaction is 2-(9Z,12Z-octadecadienoyl)-glycerol + H2O = (9Z,12Z)-octadecadienoate + glycerol + H(+). The enzyme catalyses 1-(5Z,8Z,11Z,14Z-eicosatetraenoyl)-glycerol + H2O = glycerol + (5Z,8Z,11Z,14Z)-eicosatetraenoate + H(+). It carries out the reaction 2-(5Z,8Z,11Z,14Z-eicosatetraenoyl)-glycerol + H2O = glycerol + (5Z,8Z,11Z,14Z)-eicosatetraenoate + H(+). It catalyses the reaction prostaglandin D2-1-glycerol ester + H2O = prostaglandin D2 + glycerol + H(+). The catalysed reaction is 2-glyceryl-15-deoxy-Delta(12,14)-prostaglandin J2 + H2O = 15-deoxy-Delta(12,14)-prostaglandin J2 + glycerol + H(+). The enzyme catalyses 1-(9Z,12Z-octadecadienoyl)-glycerol + H2O = (9Z,12Z)-octadecadienoate + glycerol + H(+). Phosphatidylserine (PS) lipase that mediates the hydrolysis of phosphatidylserine to generate lysophosphatidylserine (LPS). LPS constitutes a class of signaling lipids that regulates immunological and neurological processes. Has no activity towards diacylglycerol, triacylglycerol or lysophosphatidylserine lipase. Also has monoacylglycerol lipase activity, with preference for 1-(9Z,12Z-octadecadienoyl)-glycerol (1-LG) and 2-glyceryl-15-deoxy-Delta(12,14)-prostaglandin J2 (15d-PGJ(2)-G). The sequence is that of Phosphatidylserine lipase ABHD16A from Rattus norvegicus (Rat).